Here is a 102-residue protein sequence, read N- to C-terminus: Small ribosomal subunit protein uS10 (102 aa).

This sequence belongs to the universal ribosomal protein uS10 family. In terms of assembly, part of the 30S ribosomal subunit.

Its function is as follows. Involved in the binding of tRNA to the ribosomes. The chain is Small ribosomal subunit protein uS10 from Oenococcus oeni (strain ATCC BAA-331 / PSU-1).